The chain runs to 419 residues: MLLQASQATQSVWKTLNKWLPPLSRDKDWWWKTLGPQINTLLTEADYDLNERYEALLLLYRWVVPEMGPRPRSSVAPSKSFMTDDHSPIEYSWKWISGNKKPEIRYAVELVSPLAGSKQDPFNQIPTRNLVYNLAKIIPELDLTWFEHFWHELLGPGSPTTSTSGVLTKGSTVFAALEMLHGHLSVKVYFIPVETPDFSAWHQIKHAIEASGCPNLEALNHVDAYLSSHDDGRQLRPFMLAIDLVEPAASRLKIYARSNQTSFRFVRDVMTIGGLRTDLDRSIEKFSDLWKRALGLDPDTPPEDELPKVDHLTSGAVFNFDVAPKSQIPEVKAYIPVRHYANNDLQAALGLIGYLEDHGHGGYSQSYLRGLDMLAPSGQLDQATGVQTYFAVACQGEDLSLTSYLNPQFYAAFQEPERT.

The L-tryptophan site is built by Phe81, Met82, and Glu90. Phe81 lines the L-tyrosine pocket. Residues Arg105, Lys187, Tyr189, Arg251, Lys253, and Tyr255 each coordinate (2E)-geranyl diphosphate. The dimethylallyl diphosphate site is built by Arg105, Lys187, Tyr189, Arg251, Lys253, and Tyr255. Arg257 serves as a coordination point for L-tryptophan. L-tyrosine is bound at residue Arg257. (2E)-geranyl diphosphate contacts are provided by Lys332 and Tyr334. Lys332 and Tyr334 together coordinate dimethylallyl diphosphate. Tyr389 lines the L-tryptophan pocket. Tyr389 serves as a coordination point for L-tyrosine. Tyr404 provides a ligand contact to (2E)-geranyl diphosphate.

This sequence belongs to the tryptophan dimethylallyltransferase family.

The enzyme catalyses L-tyrosine + dimethylallyl diphosphate = 4-O-dimethylallyl-L-tyrosine + diphosphate. Functionally, dimethylallyltryptophan synthase; part of the DMATS1 gene cluster that mediates the biosynthesis of a reversely N-prenylated monomeric L-tryptophan (r-N-DMAT). DMATS1 catalyzes the reverse N-prenylation of L-Trp with DMAPP to yield N-dimethylallyl-L-tryptophan. DMATS1 exhibits unusually broad substrate specificity and can utilize geranyl diphosphate (GPP) or L-Tyr as an alternative prenyl donor or acceptor, respectively. Is able to catalyze both forward and reverse prenylation, i.e., at C1 or C3 of DMAPP; and it can catalyze C-N and C-O bond-forming reactions. The main product of the cluster is the reverse-N-dimethylallyl-L-tryptophan (r-N-DMAT) produced by the dimethylallyltryptophan synthase DMATS1 and it remains unclear whether this metabolite undergoes further modifications when silent gene clusters are activated. The acetylated form of r-N-DMAT, ac-r-N-DMAT, is also produced. The roles of the cytochrome P450 monooxygenase FFUJ_09176 and the methyltransferase FFUJ_09178 have still to be elucidated. This chain is Dimethylallyltryptophan synthase 1, found in Gibberella fujikuroi (strain CBS 195.34 / IMI 58289 / NRRL A-6831) (Bakanae and foot rot disease fungus).